Consider the following 230-residue polypeptide: uncharacterized protein (230 aa).

An NADP(+)-binding site is contributed by 10–34 (VVTGASSGIGEAIAKKLSQQGASIV). Ser139 is a substrate binding site. Residue Tyr152 is the Proton acceptor of the active site.

Belongs to the short-chain dehydrogenases/reductases (SDR) family.

This is an uncharacterized protein from Staphylococcus epidermidis (strain ATCC 12228 / FDA PCI 1200).